The following is a 380-amino-acid chain: Capsular polysaccharide biosynthesis glycosyltransferase CapM (380 aa).

This sequence belongs to the glycosyltransferase group 1 family. Glycosyltransferase 4 subfamily.

It participates in capsule biogenesis; capsule polysaccharide biosynthesis. Required for the biosynthesis of type 1 capsular polysaccharide. This Staphylococcus aureus protein is Capsular polysaccharide biosynthesis glycosyltransferase CapM (capM).